A 278-amino-acid polypeptide reads, in one-letter code: Transmembrane protein 41B (278 aa).

A disordered region spans residues 1–31 (MQVHERSHTGGHTFQCNHGNEKKAPAAGKVH). 6 helical membrane-spanning segments follow: residues 39 to 59 (MSLL…FLVY), 96 to 116 (FYVE…TFAI), 142 to 162 (CSGL…RPVV), 184 to 204 (LINY…FINI), 212 to 232 (PLKV…FVAI), and 249 to 269 (SWNS…PAIF). The tract at residues 127–238 (GFLYPFPLAL…FVAIKAGTTL (112 aa)) is VTT domain; required for its function in autophagy.

This sequence belongs to the TMEM41 family.

The protein resides in the endoplasmic reticulum membrane. Its subcellular location is the endomembrane system. It carries out the reaction a 1,2-diacyl-sn-glycero-3-phospho-L-serine(in) = a 1,2-diacyl-sn-glycero-3-phospho-L-serine(out). The catalysed reaction is cholesterol(in) = cholesterol(out). The enzyme catalyses a 1,2-diacyl-sn-glycero-3-phosphocholine(in) = a 1,2-diacyl-sn-glycero-3-phosphocholine(out). It catalyses the reaction a 1,2-diacyl-sn-glycero-3-phosphoethanolamine(in) = a 1,2-diacyl-sn-glycero-3-phosphoethanolamine(out). Its function is as follows. Phospholipid scramblase involved in lipid homeostasis and membrane dynamics processes. Has phospholipid scramblase activity toward cholesterol and phosphatidylserine, as well as phosphatidylethanolamine and phosphatidylcholine. Required for autophagosome formation: participates in early stages of autophagosome biogenesis at the endoplasmic reticulum (ER) membrane by reequilibrating the leaflets of the ER as lipids are extracted by atg2 (atg2a or atg2b) to mediate autophagosome assembly. In addition to autophagy, involved in other processes in which phospholipid scramblase activity is required. Required for normal motor neuron development. This chain is Transmembrane protein 41B, found in Xenopus laevis (African clawed frog).